The chain runs to 174 residues: Membrane protein NfeD2 (174 aa).

The next 3 helical transmembrane spans lie at 16 to 36, 47 to 67, and 72 to 92; these read LIIAGSLTLLFLFFGDVFSGL, LVLSFFTCFSAGGYIGELVLP, and LIALLSCILSIMLVVLLHIFV.

This sequence belongs to the NfeD family.

Its subcellular location is the cell membrane. It localises to the membrane raft. Its function is as follows. Plays a role in assembly of FloT membrane rafts, probably recruited to rafts by FloT. The chain is Membrane protein NfeD2 from Bacillus subtilis (strain 168).